The following is a 455-amino-acid chain: Venom prothrombin activator notecarin-D1 (455 aa).

The N-terminal stretch at 1 to 20 (MAPQLLLCLILTFLWSLPEA) is a signal peptide. Positions 21–40 (ESNVFLKSKVANRFLQRTKR) are excised as a propeptide. A Gla domain is found at 41-86 (SNSLFEEIRPGNIERECIEEKCSKEEAREVFEDNEKTETFWNVYVD). 4-carboxyglutamate occurs at positions 46, 47, 54, 56, 59, 60, 65, 66, 69, 72, and 75. A disulfide bridge links cysteine 57 with cysteine 62. The 37-residue stretch at 86–122 (DGDQCSSNPCHYRGTCKDGIGSYTCTCLPNYEGKNCE) folds into the EGF-like 1; calcium-binding domain. Disulfide bonds link cysteine 90-cysteine 101, cysteine 95-cysteine 110, cysteine 112-cysteine 121, cysteine 129-cysteine 140, cysteine 136-cysteine 149, cysteine 151-cysteine 164, cysteine 172-cysteine 328, cysteine 216-cysteine 221, cysteine 236-cysteine 252, cysteine 376-cysteine 390, and cysteine 401-cysteine 429. Serine 92 carries O-linked (Hex...) serine glycosylation. One can recognise an EGF-like 2 domain in the interval 129 to 164 (CRVDNGNCWHFCKRVQSETQCSCAESYRLGVDGHSC). Residues 182–209 (REASLPDFVQSQKATLLKKSDNPSPDIR) constitute a propeptide, activation peptide. Residues 210–453 (IVNGMDCKLG…FIPWIKKIMS (244 aa)) form the Peptidase S1 domain. The active-site Charge relay system is histidine 251. A glycan (N-linked (GlcNAc...) asparagine) is linked at asparagine 254. The active-site Charge relay system is the aspartate 308. Serine 405 acts as the Charge relay system in catalysis.

The protein belongs to the peptidase S1 family. Snake venom subfamily. Heterodimer of a light chain and a heavy chain; disulfide-linked. Gamma-carboxyglutamate residues are formed by vitamin K dependent carboxylation. These residues are essential for the binding of calcium. In terms of tissue distribution, expressed by the venom gland.

The protein localises to the secreted. The enzyme catalyses Selective cleavage of Arg-|-Thr and then Arg-|-Ile bonds in prothrombin to form thrombin.. Snake prothrombin activator that attacks the hemostatic system of prey. This protein is functionally similar to blood coagulation factor Xa. The sequence is that of Venom prothrombin activator notecarin-D1 from Notechis scutatus scutatus (Mainland tiger snake).